The chain runs to 208 residues: Small ribosomal subunit protein eS8 (208 aa).

A disordered region spans residues 1–27; that stretch reads MGISRDNWHKRRRTGGKRKPVHKKRKY. Positions 8–26 are enriched in basic residues; it reads WHKRRRTGGKRKPVHKKRK.

Belongs to the eukaryotic ribosomal protein eS8 family. Component of the small ribosomal subunit. Identified in a IGF2BP1-dependent mRNP granule complex containing untranslated mRNAs. Part of the small subunit (SSU) processome, composed of more than 70 proteins and the RNA chaperone small nucleolar RNA (snoRNA) U3.

The protein localises to the cytoplasm. Its subcellular location is the membrane. The protein resides in the nucleus. It is found in the nucleolus. Component of the small ribosomal subunit. The ribosome is a large ribonucleoprotein complex responsible for the synthesis of proteins in the cell. Part of the small subunit (SSU) processome, first precursor of the small eukaryotic ribosomal subunit. During the assembly of the SSU processome in the nucleolus, many ribosome biogenesis factors, an RNA chaperone and ribosomal proteins associate with the nascent pre-rRNA and work in concert to generate RNA folding, modifications, rearrangements and cleavage as well as targeted degradation of pre-ribosomal RNA by the RNA exosome. The protein is Small ribosomal subunit protein eS8 (rps8) of Danio rerio (Zebrafish).